The following is a 143-amino-acid chain: FAD synthase (143 aa).

Residues 13–14, 18–21, and Asp96 contribute to the ATP site; these read TF and HPGH.

This sequence belongs to the archaeal FAD synthase family. As to quaternary structure, homodimer. Requires a divalent metal cation as cofactor.

It carries out the reaction FMN + ATP + H(+) = FAD + diphosphate. It participates in cofactor biosynthesis; FAD biosynthesis; FAD from FMN: step 1/1. Catalyzes the transfer of the AMP portion of ATP to flavin mononucleotide (FMN) to produce flavin adenine dinucleotide (FAD) coenzyme. This is FAD synthase from Methanothrix thermoacetophila (strain DSM 6194 / JCM 14653 / NBRC 101360 / PT) (Methanosaeta thermophila).